A 68-amino-acid chain; its full sequence is ATP synthase F(0) complex subunit 8 (68 aa).

The chain crosses the membrane as a helical span at residues 8 to 24 (TWFTTILSMFLTLFIIF). An N6-acetyllysine; alternate modification is found at K54. K54 carries the N6-succinyllysine; alternate modification. K57 carries the post-translational modification N6-acetyllysine.

This sequence belongs to the ATPase protein 8 family. In terms of assembly, component of the ATP synthase complex composed at least of ATP5F1A/subunit alpha, ATP5F1B/subunit beta, ATP5MC1/subunit c (homooctomer), MT-ATP6/subunit a, MT-ATP8/subunit 8, ATP5ME/subunit e, ATP5MF/subunit f, ATP5MG/subunit g, ATP5MK/subunit k, ATP5MJ/subunit j, ATP5F1C/subunit gamma, ATP5F1D/subunit delta, ATP5F1E/subunit epsilon, ATP5PF/subunit F6, ATP5PB/subunit b, ATP5PD/subunit d, ATP5PO/subunit OSCP. ATP synthase complex consists of a soluble F(1) head domain (subunits alpha(3) and beta(3)) - the catalytic core - and a membrane F(0) domain - the membrane proton channel (subunits c, a, 8, e, f, g, k and j). These two domains are linked by a central stalk (subunits gamma, delta, and epsilon) rotating inside the F1 region and a stationary peripheral stalk (subunits F6, b, d, and OSCP). Interacts with PRICKLE3.

Its subcellular location is the mitochondrion membrane. Subunit 8, of the mitochondrial membrane ATP synthase complex (F(1)F(0) ATP synthase or Complex V) that produces ATP from ADP in the presence of a proton gradient across the membrane which is generated by electron transport complexes of the respiratory chain. ATP synthase complex consist of a soluble F(1) head domain - the catalytic core - and a membrane F(1) domain - the membrane proton channel. These two domains are linked by a central stalk rotating inside the F(1) region and a stationary peripheral stalk. During catalysis, ATP synthesis in the catalytic domain of F(1) is coupled via a rotary mechanism of the central stalk subunits to proton translocation. In vivo, can only synthesize ATP although its ATP hydrolase activity can be activated artificially in vitro. Part of the complex F(0) domain. In Hippopotamus amphibius (Hippopotamus), this protein is ATP synthase F(0) complex subunit 8.